Here is a 253-residue protein sequence, read N- to C-terminus: Chloride intracellular channel protein 4 (253 aa).

Alanine 2 carries the post-translational modification N-acetylalanine. The segment at 2–101 is required for insertion into the membrane; the sequence is ALSMPLNGLK…EEFLEEVLCP (100 aa). Serine 4 is modified (phosphoserine). Residue lysine 24 is modified to N6-acetyllysine. The helical transmembrane segment at 37-57 threads the bilayer; that stretch reads FSQRLFMILWLKGVVFSVSTV. Positions 81 to 244 constitute a GST C-terminal domain; sequence NSEVKTDVNK…PSDKEVEIAY (164 aa). Lysine 130 is subject to N6-acetyllysine. Serine 132, serine 167, and serine 236 each carry phosphoserine. Tyrosine 244 bears the Phosphotyrosine mark.

The protein belongs to the chloride channel CLIC family. Monomer. Interacts with HRH3.

The protein resides in the cytoplasm. It localises to the cytoskeleton. The protein localises to the microtubule organizing center. Its subcellular location is the centrosome. It is found in the cytoplasmic vesicle membrane. The protein resides in the nucleus. It localises to the cell membrane. The protein localises to the mitochondrion. Its subcellular location is the cell junction. It catalyses the reaction chloride(in) = chloride(out). The enzyme catalyses thiocyanate(in) = thiocyanate(out). The catalysed reaction is nitrate(in) = nitrate(out). It carries out the reaction iodide(out) = iodide(in). It catalyses the reaction bromide(in) = bromide(out). The enzyme catalyses fluoride(in) = fluoride(out). The catalysed reaction is choline(out) = choline(in). In the soluble state, catalyzes glutaredoxin-like thiol disulfide exchange reactions with reduced glutathione as electron donor. Can insert into membranes and form voltage-dependent multi-ion conductive channels. Membrane insertion seems to be redox-regulated and may occur only under oxidizing conditions. Has alternate cellular functions like a potential role in angiogenesis or in maintaining apical-basolateral membrane polarity during mitosis and cytokinesis. Could also promote endothelial cell proliferation and regulate endothelial morphogenesis (tubulogenesis). Promotes cell-surface expression of HRH3. The sequence is that of Chloride intracellular channel protein 4 (CLIC4) from Pongo abelii (Sumatran orangutan).